A 335-amino-acid chain; its full sequence is DDRGK domain-containing protein 1 (335 aa).

The Lumenal portion of the chain corresponds to 1-6 (MGDTYS). Residues 7 to 27 (LVLVAGYLSIFLFIGAIGYFY) traverse the membrane as a helical segment. Residues 28 to 335 (LSKPRIPSSN…NNDQDPVDTN (308 aa)) are Cytoplasmic-facing. Residues 37–124 (NVNEQQQQQQ…GEDIGVVAPG (88 aa)) form a disordered region. Composition is skewed to low complexity over residues 41–56 (QQQQ…QQPQ) and 91–103 (SSGS…TNSD). The segment covering 104 to 117 (NYDDDNGQEGEGED) has biased composition (acidic residues).

It belongs to the DDRGK1 family.

It localises to the endoplasmic reticulum membrane. Substrate adapter for ufmylation, the covalent attachment of the ubiquitin-like modifier UFM1 to substrate proteins. The sequence is that of DDRGK domain-containing protein 1 from Dictyostelium discoideum (Social amoeba).